Here is a 255-residue protein sequence, read N- to C-terminus: Ribosomal RNA small subunit methyltransferase G (255 aa).

The interval 1-44 is disordered; the sequence is MSSPGRPKGEYRSAQHAGAVAGPPGRPDGEHRGSSGADPNGRLR. S-adenosyl-L-methionine is bound by residues glycine 118, leucine 123, 169–170, and arginine 183; that span reads VE.

The protein belongs to the methyltransferase superfamily. RNA methyltransferase RsmG family.

Its subcellular location is the cytoplasm. It carries out the reaction guanosine(527) in 16S rRNA + S-adenosyl-L-methionine = N(7)-methylguanosine(527) in 16S rRNA + S-adenosyl-L-homocysteine. Its function is as follows. Specifically methylates the N7 position of guanine in position 527 of 16S rRNA. The polypeptide is Ribosomal RNA small subunit methyltransferase G (Bordetella petrii (strain ATCC BAA-461 / DSM 12804 / CCUG 43448)).